The primary structure comprises 764 residues: Semaphorin-3D (764 aa).

The N-terminal stretch at 1–41 is a signal peptide; the sequence is MKTAGEPDRRRQRRQVRTGRFSCAWWSTSVMLFFSLPEGNC. Positions 48–535 constitute a Sema domain; that stretch reads RVKLGYKDLI…GSDGLVQVSL (488 aa). A disulfide bond links Cys121 and Cys132. N-linked (GlcNAc...) asparagine glycosylation is present at Asn143. Cystine bridges form between Cys150–Cys159, Cys290–Cys402, and Cys314–Cys362. N-linked (GlcNAc...) asparagine glycosylation is present at Asn490. Cys538 and Cys556 are joined by a disulfide. Asn610 carries N-linked (GlcNAc...) asparagine glycosylation. In terms of domain architecture, Ig-like C2-type spans 661–740; that stretch reads GDAGSYFCTS…EYCETMWHRE (80 aa). A disulfide bridge connects residues Cys668 and Cys733. Residues 743–764 are disordered; sequence QKQKGKWKHVQELRKSRNRRHH.

The protein belongs to the semaphorin family.

Its subcellular location is the secreted. In terms of biological role, may play a role in the guidance of several axon pathways. The protein is Semaphorin-3D (sema3d) of Danio rerio (Zebrafish).